Reading from the N-terminus, the 215-residue chain is Ribosome maturation factor RimP (215 aa).

The segment at 180–215 (KDNRARKEAKKRRGEPDDDVPEGAEADATEEHEQES) is disordered. Residues 195–207 (PDDDVPEGAEADA) are compositionally biased toward acidic residues.

It belongs to the RimP family.

The protein localises to the cytoplasm. In terms of biological role, required for maturation of 30S ribosomal subunits. This chain is Ribosome maturation factor RimP, found in Mesorhizobium japonicum (strain LMG 29417 / CECT 9101 / MAFF 303099) (Mesorhizobium loti (strain MAFF 303099)).